A 1169-amino-acid chain; its full sequence is MPVAARYIFLTGLFLLSVANVALGTTEACLPAGEKKNGMTINFYQYSLKDSSTYSNPSYMAYGYADAEKLGSVSGQTKLSIDYSIPCNGASDTCACSDDDATEYSASQVVPVKRGVKLCSDNTTLSSKTEKRENDDCDQGAAYWSSDLFGFYTTPTNVTVEMTGYFLPPKTGTYTFGFATVDDSAILSVGGNVAFECCKQEQPPITSTDFTINGIKPWNADAPTDIKGSTYMYAGYYYPIKIVYSNAVSWGTLPVSVVLPDGTEVNDDFEGYVFSFDDNATQAHCSVPNPAEHARTCVSSATSSWSSSEVCTECTETESTSYVTPYVTSSSWSSSEVCTECTETESTSTSTPYVTSSSSSSSEVCTECTETESTSYVTPYVSSSTAAANYTSSFSSSSEVCTECTETESTSTSTPYVTSSSWSSSEVCTECTETESTSYVTPYVSSSTAAANYTSSFSSSSEVCTECTETESTSTSTPYVTSSSSSSSEVCTECTETESTSYVTPYVSSSTAAANYTSSFSSSSEVCTECTETESTSTSTPYVTSSSWSSSEVCTECTETESTSYVTPYVSSSTAAANYTSSFSSSSEVCTECTETESTSTSTPYATSSTGTATSFTASTSNTMTSLVQTDTTVSFSLSSTVSEHTNAPTSSVESNASTFISSNKGSVKSYVTSSIHSITPMYPSNQTVTSSSVVSTPITSESSESSASVTILPSTITSEFKPSTMKTKVVSISSSPTNLITSYDTTSKDSTVGSSTSSVSLISSISLPSSYSASSEQIFHSSIVSSNGQALTSFSSTKVSSSESSESHRTSPTTSSESGIKSSGVEIESTSTSSFSFHETSTASTSVQISSQFVTPSSPISTVAPRSTGLNSQTESTNSSKETMSSENSASVMPSSSATSPKTGKVTSDETSSGFSRDRTTVYRMTSETPSTNEQTTLITVSSCESNSCSNTVSSAVVSTATTTINGITTEYTTWCPLSATELTTVSKLESEEKTTLITVTSCESGVCSETASPAIVSTATATVNDVVTVYSTWSPQATNKLAVSSDIENSASKASFVSEAAETKSISRNNNFVPTSGTTSIETHTTTTSNASENSDNVSASEAVSSKSVTNPVLISVSQQPRGTPASSMIGSSTASLEMSSYLGIANHLLTNSGISIFIASLLLAIV.

Residues 1–24 form the signal peptide; the sequence is MPVAARYIFLTGLFLLSVANVALG. The 161-residue stretch at 111–271 folds into the PA14 domain; that stretch reads PVKRGVKLCS…GTEVNDDFEG (161 aa). N-linked (GlcNAc...) asparagine glycosylation is found at Asn-122, Asn-157, and Asn-279. 10 repeat units span residues 303–326, 330–356, 357–383, 384–419, 420–446, 447–482, 483–509, 510–545, 546–572, and 573–608. Positions 303–572 are 6 X 27 AA approximate repeats, Ser/Thr-rich; sequence SSWSSSEVCT…TSYVTPYVSS (270 aa). The tract at residues 384–608 is 4 X 36 AA approximate repeats, Ser/Thr-rich; that stretch reads STAAANYTSS…TSTSTPYATS (225 aa). N-linked (GlcNAc...) asparagine glycosylation occurs at Asn-389. An N-linked (GlcNAc...) asparagine glycan is attached at Asn-452. The N-linked (GlcNAc...) asparagine glycan is linked to Asn-515. Asn-578, Asn-656, and Asn-686 each carry an N-linked (GlcNAc...) asparagine glycan. A compositionally biased stretch (low complexity) spans 798–819; the sequence is TKVSSSESSESHRTSPTTSSES. Disordered stretches follow at residues 798 to 837, 856 to 920, and 1070 to 1107; these read TKVS…SSFS, TPSS…SRDR, and RNNN…EAVS. Positions 856–884 are enriched in polar residues; the sequence is TPSSPISTVAPRSTGLNSQTESTNSSKET. Asn-879 is a glycosylation site (N-linked (GlcNAc...) asparagine). The segment covering 886 to 902 has biased composition (low complexity); sequence SSENSASVMPSSSATSP. The span at 906 to 916 shows a compositional bias: polar residues; the sequence is KVTSDETSSGF. Low complexity predominate over residues 1077–1107; the sequence is TSGTTSIETHTTTTSNASENSDNVSASEAVS. 2 N-linked (GlcNAc...) asparagine glycosylation sites follow: Asn-1092 and Asn-1099. Gly-1146 is lipidated: GPI-anchor amidated glycine. Residues 1147–1169 constitute a propeptide, removed in mature form; the sequence is IANHLLTNSGISIFIASLLLAIV.

The protein belongs to the flocculin family. Extensively O-glycosylated. In terms of processing, the GPI-anchor is attached to the protein in the endoplasmic reticulum and serves to target the protein to the cell surface. There, the glucosamine-inositol phospholipid moiety is cleaved off and the GPI-modified mannoprotein is covalently attached via its lipidless GPI glycan remnant to the 1,6-beta-glucan of the outer cell wall layer.

It is found in the secreted. The protein localises to the cell wall. It localises to the membrane. In terms of biological role, cell wall protein that participates directly in adhesive cell-cell interactions during yeast flocculation, a reversible, asexual and Ca(2+)-dependent process in which cells adhere to form aggregates (flocs) consisting of thousands of cells. The lectin-like protein sticks out of the cell wall of flocculent cells and selectively binds mannose residues in the cell walls of adjacent cells. Activity is inhibited by mannose, glucose, maltose and sucrose. Also involved in cell-substrate adhesion, haploid invasive growth and diploid pseudohyphae formation. The sequence is that of Flocculation protein FLO10 (FLO10) from Saccharomyces cerevisiae (strain ATCC 204508 / S288c) (Baker's yeast).